The sequence spans 310 residues: Apolipoprotein E (310 aa).

The N-terminal stretch at 1-18 (MKVLWAALVVTLLAGCQA) is a signal peptide. 8 consecutive repeat copies span residues 77-98 (VLIE…QQLG), 99-120 (PMAQ…ARLG), 121-142 (ADME…AMMG), 143-164 (QSTE…KRLL), 165-186 (RDAE…EGAE), 187-204 (RSVN…EQAA), 205-226 (TVRS…QRLR), and 227-248 (GRLE…EQVQ). Residues 77–248 (VLIEETMKEV…RLDEVREQVQ (172 aa)) are 8 X 22 AA approximate tandem repeats. The residue at position 140 (methionine 140) is a Methionine sulfoxide. Position 144 is a phosphoserine (serine 144). The tract at residues 155–165 (HLRKLRKRLLR) is LDL and other lipoprotein receptors binding. Residue 159–162 (LRKR) coordinates heparin. Residues 203-283 (AATVRSLVSK…SWFEPLVQDM (81 aa)) form a lipid-binding and lipoprotein association region. 222–229 (GQRLRGRL) serves as a coordination point for heparin. The tract at residues 259–310 (NQMRLQAEAFHARLKSWFEPLVQDMQQRWAELVEKVQLAVGTSPTSESSEKQ) is homooligomerization. The interval 271 to 283 (RLKSWFEPLVQDM) is specificity for association with VLDL.

Belongs to the apolipoprotein A1/A4/E family. As to quaternary structure, homotetramer. May interact with ABCA1; functionally associated with ABCA1 in the biogenesis of HDLs. May interact with APP/A4 amyloid-beta peptide; the interaction is extremely stable in vitro but its physiological significance is unclear. May interact with MAPT. May interact with MAP2. In the cerebrospinal fluid, interacts with secreted SORL1. Interacts with PMEL; this allows the loading of PMEL luminal fragment on ILVs to induce fibril nucleation. APOE exists as multiple glycosylated and sialylated glycoforms within cells and in plasma. The extent of glycosylation and sialylation are tissue and context specific. Post-translationally, glycated in plasma VLDL. In terms of processing, phosphorylated by FAM20C in the extracellular medium.

Its subcellular location is the secreted. It localises to the extracellular space. The protein localises to the extracellular matrix. It is found in the extracellular vesicle. The protein resides in the endosome. Its subcellular location is the multivesicular body. APOE is an apolipoprotein, a protein associating with lipid particles, that mainly functions in lipoprotein-mediated lipid transport between organs via the plasma and interstitial fluids. APOE is a core component of plasma lipoproteins and is involved in their production, conversion and clearance. Apolipoproteins are amphipathic molecules that interact both with lipids of the lipoprotein particle core and the aqueous environment of the plasma. As such, APOE associates with chylomicrons, chylomicron remnants, very low density lipoproteins (VLDL) and intermediate density lipoproteins (IDL) but shows a preferential binding to high-density lipoproteins (HDL). It also binds a wide range of cellular receptors including the LDL receptor/LDLR, the LDL receptor-related proteins LRP1, LRP2 and LRP8 and the very low-density lipoprotein receptor/VLDLR that mediate the cellular uptake of the APOE-containing lipoprotein particles. Finally, APOE also has a heparin-binding activity and binds heparan-sulfate proteoglycans on the surface of cells, a property that supports the capture and the receptor-mediated uptake of APOE-containing lipoproteins by cells. A main function of APOE is to mediate lipoprotein clearance through the uptake of chylomicrons, VLDLs, and HDLs by hepatocytes. APOE is also involved in the biosynthesis by the liver of VLDLs as well as their uptake by peripheral tissues ensuring the delivery of triglycerides and energy storage in muscle, heart and adipose tissues. By participating in the lipoprotein-mediated distribution of lipids among tissues, APOE plays a critical role in plasma and tissues lipid homeostasis. APOE is also involved in two steps of reverse cholesterol transport, the HDLs-mediated transport of cholesterol from peripheral tissues to the liver, and thereby plays an important role in cholesterol homeostasis. First, it is functionally associated with ABCA1 in the biogenesis of HDLs in tissues. Second, it is enriched in circulating HDLs and mediates their uptake by hepatocytes. APOE also plays an important role in lipid transport in the central nervous system, regulating neuron survival and sprouting. This chain is Apolipoprotein E (APOE), found in Tapirus indicus (Asiatic tapir).